The chain runs to 422 residues: UDP-N-acetylglucosamine 1-carboxyvinyltransferase (422 aa).

K23 to N24 serves as a coordination point for phosphoenolpyruvate. Residue R92 participates in UDP-N-acetyl-alpha-D-glucosamine binding. The active-site Proton donor is C116. A 2-(S-cysteinyl)pyruvic acid O-phosphothioketal modification is found at C116. UDP-N-acetyl-alpha-D-glucosamine contacts are provided by residues R121–L125, K161–V164, D306, and I328.

This sequence belongs to the EPSP synthase family. MurA subfamily.

The protein resides in the cytoplasm. The enzyme catalyses phosphoenolpyruvate + UDP-N-acetyl-alpha-D-glucosamine = UDP-N-acetyl-3-O-(1-carboxyvinyl)-alpha-D-glucosamine + phosphate. It functions in the pathway cell wall biogenesis; peptidoglycan biosynthesis. In terms of biological role, cell wall formation. Adds enolpyruvyl to UDP-N-acetylglucosamine. The chain is UDP-N-acetylglucosamine 1-carboxyvinyltransferase from Aliivibrio salmonicida (strain LFI1238) (Vibrio salmonicida (strain LFI1238)).